A 918-amino-acid chain; its full sequence is Rap guanine nucleotide exchange factor 3 (918 aa).

At Ser-79 the chain carries Phosphoserine. Positions 110-186 constitute a DEP domain; sequence ATYPTLIRDR…RDAQFYRFPG (77 aa). The segment at 218-242 is interaction with PDE3B; sequence TVALRKPPGQRTDEELDLIFEELLH. Residues 311–314 and 321–322 contribute to the 3',5'-cyclic AMP site; these read GQLA and RA. The segment at 369–388 is disordered; the sequence is TSQGAGPSRPPTPGRNRYTV. One can recognise an N-terminal Ras-GEF domain in the interval 384 to 521; the sequence is NRYTVMSGTP…EQYPERRRHH (138 aa). The interval 398–422 is interaction with PDE3B; it reads ELLLEAMRPDSSAHDPTETFLSDFL. Residues Ser-531 and Ser-859 each carry the phosphoserine modification. Positions 665 to 884 constitute a Ras-GEF domain; that stretch reads SAKDLAGQLT…SRISTCSEQS (220 aa).

In terms of assembly, interacts with PDE3B and PIK3R6; form a signaling complex that regulates phosphatidylinositol 3-kinase gamma in angiogenesis.

Its subcellular location is the cytoplasm. The protein localises to the membrane. Functionally, guanine nucleotide exchange factor (GEF) for RAP1A and RAP2A small GTPases that is activated by binding cAMP. Through simultaneous binding of PDE3B to RAPGEF3 and PIK3R6 is assembled in a signaling complex in which it activates the PI3K gamma complex and which is involved in angiogenesis. Plays a role in the modulation of the cAMP-induced dynamic control of endothelial barrier function through a pathway that is independent on Rho-mediated signaling. Required for the actin rearrangement at cell-cell junctions, such as stress fibers and junctional actin. The sequence is that of Rap guanine nucleotide exchange factor 3 (Rapgef3) from Mus musculus (Mouse).